Consider the following 211-residue polypeptide: MGDNIVLYYFDARGKAELIRLIFAYLGIEYTDKRFGVNGDAFVEFKNFKKEKDTPFEQVPILQIGDLILAQSQAIVRYLSKKYNICGESELNEFYADMIFCGVQDIHYKFNNTNLFKQNETTFLNEDLPKWSGYFEKLLKKNHTNNNNDKYYFVGNNLTYADLAVFNLYDDIETKYPSSLKNFPLLKAHNEFISNLPNIKNYITNRKESVY.

Residues 3-87 enclose the GST N-terminal domain; the sequence is DNIVLYYFDA…YLSKKYNICG (85 aa). Residues 58–59, 71–72, Asp-105, Lys-117, and Thr-121 contribute to the glutathione site; these read QV and QS. One can recognise a GST C-terminal domain in the interval 89-211; sequence SELNEFYADM…YITNRKESVY (123 aa).

It belongs to the GST superfamily. Homodimer. In the absence of ligands two homodimers may interact to form a tetramer.

The catalysed reaction is RX + glutathione = an S-substituted glutathione + a halide anion + H(+). Its activity is regulated as follows. Inhibited by chloroquine, cibacron blue, ferriprotoporphyrin IX (hemin) and S-hexylglutathione. Functionally, conjugation of reduced glutathione to a wide number of exogenous and endogenous hydrophobic electrophiles. May also function as a storage protein or ligandin for parasitotoxic ferriprotoporphyrin IX (hemin). This Plasmodium falciparum (isolate 3D7) protein is Glutathione S-transferase.